We begin with the raw amino-acid sequence, 82 residues long: U10-myrmicitoxin-Mri1c (82 aa).

The N-terminal stretch at 1-26 is a signal peptide; sequence MRLSYVSLTLAIIFVMAIVHAPETEA. A propeptide spanning residues 27–52 is cleaved from the precursor; the sequence is KAYPEADAVGEASAVGEADAVGVADP. Residue Ile-81 is modified to Isoleucine amide.

It belongs to the formicidae venom precursor-01 superfamily. Expressed by the venom gland.

It is found in the secreted. Induces paralysis 5 minutes after injection into blowflies (L.caesar). In most cases is not lethal 24 hours after injection, but paralysis is irreversible. May have antimicrobial properties, like most ant linear peptides. The protein is U10-myrmicitoxin-Mri1c of Manica rubida (European giant red ant).